The sequence spans 302 residues: tRNA dimethylallyltransferase (302 aa).

Position 9–16 (9–16 (GATATGKS)) interacts with ATP. Residue 11–16 (TATGKS) participates in substrate binding. An interaction with substrate tRNA region spans residues 34–37 (DSRQ).

This sequence belongs to the IPP transferase family. As to quaternary structure, monomer. Requires Mg(2+) as cofactor.

It catalyses the reaction adenosine(37) in tRNA + dimethylallyl diphosphate = N(6)-dimethylallyladenosine(37) in tRNA + diphosphate. Catalyzes the transfer of a dimethylallyl group onto the adenine at position 37 in tRNAs that read codons beginning with uridine, leading to the formation of N6-(dimethylallyl)adenosine (i(6)A). This Nostoc punctiforme (strain ATCC 29133 / PCC 73102) protein is tRNA dimethylallyltransferase.